Reading from the N-terminus, the 612-residue chain is Threonine--tRNA ligase (612 aa).

A catalytic region spans residues 218–509 (DHRKLGVELG…LSEHFGGNFP (292 aa)). 3 residues coordinate Zn(2+): Cys310, His361, and His486.

Belongs to the class-II aminoacyl-tRNA synthetase family. In terms of assembly, homodimer. The cofactor is Zn(2+).

It localises to the cytoplasm. The catalysed reaction is tRNA(Thr) + L-threonine + ATP = L-threonyl-tRNA(Thr) + AMP + diphosphate + H(+). Catalyzes the attachment of threonine to tRNA(Thr) in a two-step reaction: L-threonine is first activated by ATP to form Thr-AMP and then transferred to the acceptor end of tRNA(Thr). Also edits incorrectly charged L-seryl-tRNA(Thr). The chain is Threonine--tRNA ligase from Helicobacter pylori (strain HPAG1).